The sequence spans 150 residues: Infection structure-specific protein 24 (150 aa).

Functionally, involved in the development of infection structures. The germ tube elongates across the leaf surface of the infected plant until it recognizes a stomate. Physical stimuli provided by the stomate induce differentiation of the germ tube to form a series of infection structures involved in host colonization. The protein is Infection structure-specific protein 24 (INF24) of Uromyces appendiculatus (Rust fungus).